Reading from the N-terminus, the 431-residue chain is Enolase (431 aa).

Gln-164 is a (2R)-2-phosphoglycerate binding site. The active-site Proton donor is the Glu-206. Positions 243, 286, and 313 each coordinate Mg(2+). Lys-338, Arg-367, Ser-368, and Lys-389 together coordinate (2R)-2-phosphoglycerate. Lys-338 functions as the Proton acceptor in the catalytic mechanism.

It belongs to the enolase family. It depends on Mg(2+) as a cofactor.

It is found in the cytoplasm. The protein resides in the secreted. Its subcellular location is the cell surface. The catalysed reaction is (2R)-2-phosphoglycerate = phosphoenolpyruvate + H2O. It participates in carbohydrate degradation; glycolysis; pyruvate from D-glyceraldehyde 3-phosphate: step 4/5. Functionally, catalyzes the reversible conversion of 2-phosphoglycerate (2-PG) into phosphoenolpyruvate (PEP). It is essential for the degradation of carbohydrates via glycolysis. In Chloroflexus aggregans (strain MD-66 / DSM 9485), this protein is Enolase.